The following is a 511-amino-acid chain: 2-isopropylmalate synthase (511 aa).

The Pyruvate carboxyltransferase domain maps to 5 to 267 (IQIFDTTLRD…ESQINLEETK (263 aa)). Asp-14, His-202, His-204, and Asn-238 together coordinate Mn(2+). Residues 391-511 (QLDNLQLQYV…EYELKEGIRT (121 aa)) form a regulatory domain region.

The protein belongs to the alpha-IPM synthase/homocitrate synthase family. LeuA type 1 subfamily. In terms of assembly, homodimer. It depends on Mn(2+) as a cofactor.

The protein resides in the cytoplasm. It carries out the reaction 3-methyl-2-oxobutanoate + acetyl-CoA + H2O = (2S)-2-isopropylmalate + CoA + H(+). Its pathway is amino-acid biosynthesis; L-leucine biosynthesis; L-leucine from 3-methyl-2-oxobutanoate: step 1/4. In terms of biological role, catalyzes the condensation of the acetyl group of acetyl-CoA with 3-methyl-2-oxobutanoate (2-ketoisovalerate) to form 3-carboxy-3-hydroxy-4-methylpentanoate (2-isopropylmalate). The protein is 2-isopropylmalate synthase of Staphylococcus epidermidis (strain ATCC 35984 / DSM 28319 / BCRC 17069 / CCUG 31568 / BM 3577 / RP62A).